The primary structure comprises 234 residues: Gem-associated protein 8 (234 aa).

Residues Leu-60 to Ser-116 form a disordered region. Over residues Lys-67 to Gly-83 the composition is skewed to low complexity. Residues Arg-100 to Glu-110 are compositionally biased toward basic and acidic residues. Residues Ile-130–Gln-153 are a coiled coil.

As to quaternary structure, part of the core SMN complex that contains SMN1, GEMIN2/SIP1, DDX20/GEMIN3, GEMIN4, GEMIN5, GEMIN6, GEMIN7, GEMIN8 and STRAP/UNRIP. Part of the SMN-Sm complex that contains SMN1, GEMIN2/SIP1, DDX20/GEMIN3, GEMIN4, GEMIN5, GEMIN6, GEMIN7, GEMIN8, STRAP/UNRIP and the Sm proteins SNRPB, SNRPD1, SNRPD2, SNRPD3, SNRPE, SNRPF and SNRPG. Interacts with GEMIN6; the interaction is direct. Interacts with GEMIN7; the interaction is direct. Interacts with SMN1; the interaction is direct. Interacts with GEMIN4; the interaction is direct.

Its subcellular location is the nucleus. It localises to the gem. The protein resides in the cytoplasm. The SMN complex catalyzes the assembly of small nuclear ribonucleoproteins (snRNPs), the building blocks of the spliceosome, and thereby plays an important role in the splicing of cellular pre-mRNAs. Most spliceosomal snRNPs contain a common set of Sm proteins SNRPB, SNRPD1, SNRPD2, SNRPD3, SNRPE, SNRPF and SNRPG that assemble in a heptameric protein ring on the Sm site of the small nuclear RNA to form the core snRNP (Sm core). In the cytosol, the Sm proteins SNRPD1, SNRPD2, SNRPE, SNRPF and SNRPG are trapped in an inactive 6S pICln-Sm complex by the chaperone CLNS1A that controls the assembly of the core snRNP. To assemble core snRNPs, the SMN complex accepts the trapped 5Sm proteins from CLNS1A forming an intermediate. Binding of snRNA inside 5Sm triggers eviction of the SMN complex, thereby allowing binding of SNRPD3 and SNRPB to complete assembly of the core snRNP. This chain is Gem-associated protein 8 (GEMIN8), found in Bos taurus (Bovine).